A 453-amino-acid polypeptide reads, in one-letter code: Bifunctional protein GlmU (453 aa).

A pyrophosphorylase region spans residues methionine 1–arginine 227. UDP-N-acetyl-alpha-D-glucosamine contacts are provided by residues leucine 9 to glycine 12, lysine 23, glutamine 74, glycine 79 to threonine 80, tyrosine 101 to aspartate 103, glycine 138, glutamate 152, asparagine 167, and asparagine 225. Aspartate 103 is a Mg(2+) binding site. Asparagine 225 contacts Mg(2+). The segment at leucine 228 to alanine 248 is linker. An N-acetyltransferase region spans residues glycine 249–lysine 453. UDP-N-acetyl-alpha-D-glucosamine contacts are provided by arginine 331 and lysine 349. The active-site Proton acceptor is histidine 361. Positions 364 and 375 each coordinate UDP-N-acetyl-alpha-D-glucosamine. Residues alanine 378, asparagine 384–tyrosine 385, serine 403, alanine 421, and arginine 438 contribute to the acetyl-CoA site.

The protein in the N-terminal section; belongs to the N-acetylglucosamine-1-phosphate uridyltransferase family. This sequence in the C-terminal section; belongs to the transferase hexapeptide repeat family. In terms of assembly, homotrimer. Requires Mg(2+) as cofactor.

It localises to the cytoplasm. It carries out the reaction alpha-D-glucosamine 1-phosphate + acetyl-CoA = N-acetyl-alpha-D-glucosamine 1-phosphate + CoA + H(+). The catalysed reaction is N-acetyl-alpha-D-glucosamine 1-phosphate + UTP + H(+) = UDP-N-acetyl-alpha-D-glucosamine + diphosphate. It functions in the pathway nucleotide-sugar biosynthesis; UDP-N-acetyl-alpha-D-glucosamine biosynthesis; N-acetyl-alpha-D-glucosamine 1-phosphate from alpha-D-glucosamine 6-phosphate (route II): step 2/2. The protein operates within nucleotide-sugar biosynthesis; UDP-N-acetyl-alpha-D-glucosamine biosynthesis; UDP-N-acetyl-alpha-D-glucosamine from N-acetyl-alpha-D-glucosamine 1-phosphate: step 1/1. Its pathway is bacterial outer membrane biogenesis; LPS lipid A biosynthesis. Catalyzes the last two sequential reactions in the de novo biosynthetic pathway for UDP-N-acetylglucosamine (UDP-GlcNAc). The C-terminal domain catalyzes the transfer of acetyl group from acetyl coenzyme A to glucosamine-1-phosphate (GlcN-1-P) to produce N-acetylglucosamine-1-phosphate (GlcNAc-1-P), which is converted into UDP-GlcNAc by the transfer of uridine 5-monophosphate (from uridine 5-triphosphate), a reaction catalyzed by the N-terminal domain. The protein is Bifunctional protein GlmU of Histophilus somni (strain 129Pt) (Haemophilus somnus).